Here is a 313-residue protein sequence, read N- to C-terminus: tRNA dimethylallyltransferase (313 aa).

17-24 (GPTASGKT) serves as a coordination point for ATP. Residue 19–24 (TASGKT) participates in substrate binding. 3 interaction with substrate tRNA regions span residues 42–45 (DSAL), 166–170 (QRLSR), and 247–252 (RCVGYR).

It belongs to the IPP transferase family. Monomer. The cofactor is Mg(2+).

The enzyme catalyses adenosine(37) in tRNA + dimethylallyl diphosphate = N(6)-dimethylallyladenosine(37) in tRNA + diphosphate. Its function is as follows. Catalyzes the transfer of a dimethylallyl group onto the adenine at position 37 in tRNAs that read codons beginning with uridine, leading to the formation of N6-(dimethylallyl)adenosine (i(6)A). In Yersinia pseudotuberculosis serotype O:1b (strain IP 31758), this protein is tRNA dimethylallyltransferase.